The sequence spans 377 residues: Phosphoserine aminotransferase (377 aa).

R43 is an L-glutamate binding site. Residues W105, T164, D189, and Q212 each coordinate pyridoxal 5'-phosphate. K213 is modified (N6-(pyridoxal phosphate)lysine). Position 254–255 (254–255 (NT)) interacts with pyridoxal 5'-phosphate.

Belongs to the class-V pyridoxal-phosphate-dependent aminotransferase family. SerC subfamily. Homodimer. Pyridoxal 5'-phosphate is required as a cofactor.

The protein resides in the cytoplasm. The catalysed reaction is O-phospho-L-serine + 2-oxoglutarate = 3-phosphooxypyruvate + L-glutamate. It catalyses the reaction 4-(phosphooxy)-L-threonine + 2-oxoglutarate = (R)-3-hydroxy-2-oxo-4-phosphooxybutanoate + L-glutamate. It functions in the pathway amino-acid biosynthesis; L-serine biosynthesis; L-serine from 3-phospho-D-glycerate: step 2/3. Its pathway is cofactor biosynthesis; pyridoxine 5'-phosphate biosynthesis; pyridoxine 5'-phosphate from D-erythrose 4-phosphate: step 3/5. Its function is as follows. Catalyzes the reversible conversion of 3-phosphohydroxypyruvate to phosphoserine and of 3-hydroxy-2-oxo-4-phosphonooxybutanoate to phosphohydroxythreonine. This chain is Phosphoserine aminotransferase, found in Bordetella pertussis (strain Tohama I / ATCC BAA-589 / NCTC 13251).